The following is a 442-amino-acid chain: Hydroxycinnamoyltransferase 2 (442 aa).

Catalysis depends on proton acceptor residues H159 and D389.

The protein belongs to the plant acyltransferase family. In terms of tissue distribution, expressed in roots and leaves. Expressed at low levels in stems and seeds.

Its function is as follows. Hydroxycinnamoyl transferase that catalyzes the transfer of an acyl from p-coumaryol-CoA to various acyl acceptors. Can use feruloyl-CoA and caffeoyl-CoA as acyl donors. The sequence is that of Hydroxycinnamoyltransferase 2 from Oryza sativa subsp. japonica (Rice).